The chain runs to 523 residues: Probable DNA ligase (523 aa).

An ATP-binding site is contributed by Glu-210. Lys-212 acts as the N6-AMP-lysine intermediate in catalysis. ATP is bound by residues Arg-217, Arg-232, Glu-261, Phe-317, Arg-388, and Lys-394.

Belongs to the ATP-dependent DNA ligase family. Requires Mg(2+) as cofactor.

It carries out the reaction ATP + (deoxyribonucleotide)n-3'-hydroxyl + 5'-phospho-(deoxyribonucleotide)m = (deoxyribonucleotide)n+m + AMP + diphosphate.. DNA ligase that seals nicks in double-stranded DNA during DNA replication, DNA recombination and DNA repair. This is Probable DNA ligase from Nocardia farcinica (strain IFM 10152).